A 401-amino-acid polypeptide reads, in one-letter code: Anhydro-N-acetylmuramic acid kinase (401 aa).

Position 25 to 32 (25 to 32) interacts with ATP; the sequence is GTSLDGLD.

The protein belongs to the anhydro-N-acetylmuramic acid kinase family.

The catalysed reaction is 1,6-anhydro-N-acetyl-beta-muramate + ATP + H2O = N-acetyl-D-muramate 6-phosphate + ADP + H(+). It functions in the pathway amino-sugar metabolism; 1,6-anhydro-N-acetylmuramate degradation. Its pathway is cell wall biogenesis; peptidoglycan recycling. Functionally, catalyzes the specific phosphorylation of 1,6-anhydro-N-acetylmuramic acid (anhMurNAc) with the simultaneous cleavage of the 1,6-anhydro ring, generating MurNAc-6-P. Is required for the utilization of anhMurNAc either imported from the medium or derived from its own cell wall murein, and thus plays a role in cell wall recycling. In Pseudoalteromonas translucida (strain TAC 125), this protein is Anhydro-N-acetylmuramic acid kinase.